A 284-amino-acid polypeptide reads, in one-letter code: MQPTPTQRPEAIVHDEKAQLDFARDMSYGDYLHLDELLGAQHPLSPEHNEMLFIVQHQTSELWMKLMLHELRAAIAAIQQDRLQPAFKMLARVSKILEQLVSAWDVLATMTPPEYSALRPYLAHSSGFQSYQYRQIEYLLGNKNAAMLQPHAHRADLLAQVRAAFEAPSLYDEALRFLARSGLAVPAGALQRDWTQPYRADDQVEQAWLTVYRQSERYWNQYQLGEKLTDLEDAFRLWRFRHVTTVERIIGFKRGTGGTSGVTYLRKMLEVVLFPEIWKLRTDL.

Substrate contacts are provided by residues 53–57, tyrosine 115, and arginine 119; that span reads FIVQH. Histidine 242 is a binding site for heme. A substrate-binding site is contributed by threonine 256.

Belongs to the tryptophan 2,3-dioxygenase family. As to quaternary structure, homotetramer. Heme is required as a cofactor.

The enzyme catalyses L-tryptophan + O2 = N-formyl-L-kynurenine. The protein operates within amino-acid degradation; L-tryptophan degradation via kynurenine pathway; L-kynurenine from L-tryptophan: step 1/2. In terms of biological role, heme-dependent dioxygenase that catalyzes the oxidative cleavage of the L-tryptophan (L-Trp) pyrrole ring and converts L-tryptophan to N-formyl-L-kynurenine. Catalyzes the oxidative cleavage of the indole moiety. The chain is Tryptophan 2,3-dioxygenase from Bordetella pertussis (strain Tohama I / ATCC BAA-589 / NCTC 13251).